Here is a 185-residue protein sequence, read N- to C-terminus: ATP-dependent protease subunit HslV (185 aa).

Thr-12 is a catalytic residue. Na(+) contacts are provided by Ala-168, Cys-171, and Thr-174.

It belongs to the peptidase T1B family. HslV subfamily. As to quaternary structure, a double ring-shaped homohexamer of HslV is capped on each side by a ring-shaped HslU homohexamer. The assembly of the HslU/HslV complex is dependent on binding of ATP.

The protein localises to the cytoplasm. It catalyses the reaction ATP-dependent cleavage of peptide bonds with broad specificity.. With respect to regulation, allosterically activated by HslU binding. In terms of biological role, protease subunit of a proteasome-like degradation complex believed to be a general protein degrading machinery. The chain is ATP-dependent protease subunit HslV from Cereibacter sphaeroides (strain ATCC 17025 / ATH 2.4.3) (Rhodobacter sphaeroides).